The primary structure comprises 107 residues: Early E3A 12.5 kDa protein (107 aa).

The protein belongs to the adenoviridae E3A-2 family.

The protein is Early E3A 12.5 kDa protein of Homo sapiens (Human).